The following is a 463-amino-acid chain: MSLIATRFAPSPTGYLHIGGLRTAIFNYLFARANQGKFFLRIEDTDLSRNSIEAANAIIEAFKWVGLEYDGEILYQSKRFEIYKECIQKLLNEDKAYYCYMSKDELDALREKQKVRKETPRYDNRYRDFKGTPPKGIEPVVRIKIPQNELICFNDGIKGEVRVNTNELDDFIIARSDGTPTYNFVVTIDDALMGITDVIRGDDHLSNTPKQIVLYKALNFKIPNFFHVPMILNEEGQKLSKRHGATNVMDYQEMGYLKEALINFLARLGWSYRDKEIFSMQELLELFDPKDLNSSPSCFSWHKLNWLNAHYLKTQSTQELLKLLKPFNFSDLSHLNPTQLDRLFDALKERSQTLKELALKIDEVLIAPIEYEEKVLKKLDQVLVTPLLEKFKLELNQADFNDENALENAIHKIIEEEKIKVGSFMQPLRLALLGKGGGIGLKEVLFILGKTESIKRIEKFLKN.

The short motif at 10 to 20 is the 'HIGH' region element; it reads PSPTGYLHIGG. A 'KMSKS' region motif is present at residues 238–242; it reads KLSKR. Lys241 contributes to the ATP binding site.

The protein belongs to the class-I aminoacyl-tRNA synthetase family. Glutamate--tRNA ligase type 1 subfamily. In terms of assembly, monomer.

The protein localises to the cytoplasm. The enzyme catalyses tRNA(Glu) + L-glutamate + ATP = L-glutamyl-tRNA(Glu) + AMP + diphosphate. Functionally, catalyzes the attachment of glutamate to tRNA(Glu) in a two-step reaction: glutamate is first activated by ATP to form Glu-AMP and then transferred to the acceptor end of tRNA(Glu). This is Glutamate--tRNA ligase 2 from Helicobacter acinonychis (strain Sheeba).